The chain runs to 551 residues: MRLDVVSKAARAAQRFSAQCHGQKFRTAHASATLRAALAVEASEANQKGRSAGLLAAMALMGVAGVASMDDNAAAKCEGAAKPVSREAVTQAMLKEVVTKLNRIESAVANPHRHTDGLNVGVDVVLGAQWGDEGKGKLVDSLSQSYDVIVRVAGGSNAGHTIVHEGKKYKFHLVPSGILNPNAICIIGNGVVVHLPSFLEELEELKRMGVDYEGRILISDRAHMVLDLHQEVDGINELRRGRNKIGTTKKGIGPAYSSKMLRNGVRVGDLRYFDDFTEKMVDLVKFYKDNYPELEADAEAEIKVYSDMKDKILDMTVDTVSYLNNAYVAGKKILVEGANATMLDIDFGTYPYVTSSNPSIGSVCTGGGISPNRLNGIIGIVKAYCTRVGEGPFPTELHDDVGEHLGTVGAEFGTTTGRARRCGWLDIPQMRYSNMVNGFTELNLTKLDVLTGLKKVKIGVAYWHEGKKLDGMPSNLQLLQDSVVEYEEMEGWSEDISKCKTFEELPVAAQKYVLRVEELLGTHIKWIGVGPDRFDVITRTHPLEKAYISGN.

GTP is bound by residues 131-137 (GDEGKGK) and 159-161 (GHT). The Proton acceptor role is filled by Asp-132. Positions 132 and 159 each coordinate Mg(2+). Residues 132 to 135 (DEGK), 157 to 160 (NAGH), Thr-248, Arg-262, Asn-339, Thr-354, and Arg-418 each bind IMP. His-160 serves as the catalytic Proton donor. Substrate is bound at residue 414-420 (TTTGRAR). GTP-binding positions include Arg-420, 446–448 (KLD), and 528–530 (GVG).

This sequence belongs to the adenylosuccinate synthetase family. As to quaternary structure, homodimer. Mg(2+) is required as a cofactor.

It localises to the cytoplasm. The catalysed reaction is IMP + L-aspartate + GTP = N(6)-(1,2-dicarboxyethyl)-AMP + GDP + phosphate + 2 H(+). Its pathway is purine metabolism; AMP biosynthesis via de novo pathway; AMP from IMP: step 1/2. Its function is as follows. Plays an important role in the de novo pathway and in the salvage pathway of purine nucleotide biosynthesis. Catalyzes the first committed step in the biosynthesis of AMP from IMP. The sequence is that of Adenylosuccinate synthetase from Phytophthora infestans (strain T30-4) (Potato late blight agent).